A 481-amino-acid polypeptide reads, in one-letter code: OTU domain-containing protein 1 (481 aa).

Disordered regions lie at residues 18–60 (PTAA…AAAE) and 202–282 (LAAA…IVSR). Low complexity predominate over residues 38 to 58 (PPGAAGAAPEPETGECQPAAA). Residues 225 to 257 (GEEHLAERGPRGWERGGDRCDAPGGDAARRPDP) are compositionally biased toward basic and acidic residues. Low complexity predominate over residues 261 to 281 (APPAGSIEAAPSSAAEPVIVS). One can recognise an OTU domain in the interval 309-438 (KYRFHIIPDG…NGHYDAVFDH (130 aa)). The cys-loop stretch occupies residues 314-320 (IIPDGNC). D317 is an active-site residue. C320 (nucleophile) is an active-site residue. The interval 369–379 (AAQDGAWAGYP) is his-loop. Residues 426–431 (WLSNGH) are variable-loop. H431 is a catalytic residue. Residues 457-476 (KRDEELAKSMAISLSKMYIE) enclose the UIM domain.

The enzyme catalyses Thiol-dependent hydrolysis of ester, thioester, amide, peptide and isopeptide bonds formed by the C-terminal Gly of ubiquitin (a 76-residue protein attached to proteins as an intracellular targeting signal).. Deubiquitinating enzyme that specifically hydrolyzes 'Lys-63'-linked polyubiquitin to monoubiquitin. Required for the stability and translation of a subset mRNAs with a high abundance of rare codons by mediating deubiquitination of 40S ribosomal protein RPS10/eS10, thereby antagonizing ZNF598-mediated 40S ubiquitination. The abundance of rare codons in mRNAs can limit the translation rate and can lead to ribosome collisions that trigger activation of ribosome quality control (RQC) pathway by ZNF598. OTUD1-mediated deubiquitination prevents activation of the RQC and subsequent dissociation of ribosomes and stimulates formation of polysomes and translation. This chain is OTU domain-containing protein 1, found in Homo sapiens (Human).